A 309-amino-acid chain; its full sequence is Probable manganese-dependent inorganic pyrophosphatase (309 aa).

Mn(2+) contacts are provided by His9, Asp13, Asp15, Asp75, His97, and Asp149.

It belongs to the PPase class C family. It depends on Mn(2+) as a cofactor.

Its subcellular location is the cytoplasm. The catalysed reaction is diphosphate + H2O = 2 phosphate + H(+). The chain is Probable manganese-dependent inorganic pyrophosphatase from Staphylococcus aureus (strain COL).